The sequence spans 201 residues: ATP-dependent Clp protease proteolytic subunit (201 aa).

S97 serves as the catalytic Nucleophile. The active site involves H122.

Belongs to the peptidase S14 family. Fourteen ClpP subunits assemble into 2 heptameric rings which stack back to back to give a disk-like structure with a central cavity, resembling the structure of eukaryotic proteasomes.

The protein resides in the cytoplasm. It catalyses the reaction Hydrolysis of proteins to small peptides in the presence of ATP and magnesium. alpha-casein is the usual test substrate. In the absence of ATP, only oligopeptides shorter than five residues are hydrolyzed (such as succinyl-Leu-Tyr-|-NHMec, and Leu-Tyr-Leu-|-Tyr-Trp, in which cleavage of the -Tyr-|-Leu- and -Tyr-|-Trp bonds also occurs).. Functionally, cleaves peptides in various proteins in a process that requires ATP hydrolysis. Has a chymotrypsin-like activity. Plays a major role in the degradation of misfolded proteins. The polypeptide is ATP-dependent Clp protease proteolytic subunit (Nitratidesulfovibrio vulgaris (strain DSM 19637 / Miyazaki F) (Desulfovibrio vulgaris)).